Consider the following 194-residue polypeptide: MKQSHFFAHLARMKLIQRWPLMRSVSSENISEHSLQVAFVAHALALIKNKKFDGKLNPEHIALLGMYHDTSEVLTGDLPTPVKYYNPDIAQEYKKIEAAAEQRLLSMLPEEFRDDFSPFLISGTANKEEQSIVKQADTICAYLKCLEELSAGNHEYEQAKRRLEETLEQRKSPEMDYFLTTFAPSFELSLDEIS.

Residues 18–19 (RW) and histidine 33 each bind substrate. Residues 30–142 (ISEHSLQVAF…VKQADTICAY (113 aa)) enclose the HD domain. A divalent metal cation contacts are provided by histidine 33, histidine 68, and aspartate 69. Substrate is bound by residues aspartate 69, 77–80 (DLPT), and aspartate 137. Aspartate 137 serves as a coordination point for a divalent metal cation.

This sequence belongs to the 5DNU family. In terms of assembly, homodimer. The cofactor is a divalent metal cation.

It localises to the cytoplasm. The catalysed reaction is a 2'-deoxyribonucleoside 5'-phosphate + H2O = a 2'-deoxyribonucleoside + phosphate. Catalyzes the strictly specific dephosphorylation of 2'-deoxyribonucleoside 5'-monophosphates. In Vibrio atlanticus (strain LGP32) (Vibrio splendidus (strain Mel32)), this protein is 5'-deoxynucleotidase VS_2195.